The primary structure comprises 1350 residues: Probable serine/threonine-protein kinase DDB_G0278845 (1350 aa).

Disordered regions lie at residues 66 to 109, 121 to 159, 179 to 249, 270 to 296, 337 to 396, 431 to 506, 525 to 596, and 612 to 701; these read RELN…NNIR, ENGL…PKGL, LANN…LNSI, SSIN…NEYS, NNYN…RDDL, GSTI…EKKK, NDSN…IPTP, and NNNS…NTNE. A compositionally biased stretch (polar residues) spans 84–98; it reads KYLTSSHSSVVIPQD. Composition is skewed to low complexity over residues 127-140 and 181-210; these read SPTS…TPTT and NNNN…NNSN. Residues 211–222 are compositionally biased toward polar residues; sequence KISRLINNSNTT. Residues 223–235 are compositionally biased toward low complexity; it reads DSNASIRSSNNNN. Acidic residues predominate over residues 236-246; that stretch reads DDFDNNDDEDL. Low complexity-rich tracts occupy residues 270–293 and 337–391; these read SSIN…DNVN and NNYN…GYNN. A compositionally biased stretch (polar residues) spans 431-443; that stretch reads GSTIFTSTSSDIA. Residues 454–482 are compositionally biased toward acidic residues; it reads NENENENENENENENENDNDSDSENENEN. 2 stretches are compositionally biased toward low complexity: residues 483–495 and 525–551; these read DNSI…KSNS and NDSN…PFSP. Positions 565-592 are enriched in polar residues; the sequence is PKPTLQRQRSNSKNVLYSPNASPSNSCK. Composition is skewed to low complexity over residues 612–637, 645–679, and 690–701; these read NNNS…NNID, NNNN…NNNN, and KKTPNNKINTNE. A Protein kinase domain is found at 756-1082; it reads FTLIEKIGEG…VENIKNHIFF (327 aa). ATP is bound by residues 762-770 and Lys785; that span reads IGEGGFGQV. The active-site Proton acceptor is the Asp880. The region spanning 1083–1203 is the AGC-kinase C-terminal domain; the sequence is NGVPWGKLHD…PRADDQPLLW (121 aa). 4 disordered regions span residues 1129-1159, 1190-1219, 1232-1285, and 1300-1350; these read SLLP…NDKM, GFTY…NNNN, NNNN…NKTV, and NCNN…KQQQ. Residues 1131 to 1142 show a composition bias toward pro residues; sequence LPPPLPPPPQTP. Composition is skewed to low complexity over residues 1204–1219, 1232–1283, and 1300–1313; these read NNNN…NNNN, NNNN…SNNK, and NCNN…NNIN. 2 stretches are compositionally biased toward polar residues: residues 1314-1330 and 1338-1350; these read TGNL…SGEN and PTSP…KQQQ.

It belongs to the protein kinase superfamily. AGC Ser/Thr protein kinase family.

The enzyme catalyses L-seryl-[protein] + ATP = O-phospho-L-seryl-[protein] + ADP + H(+). It carries out the reaction L-threonyl-[protein] + ATP = O-phospho-L-threonyl-[protein] + ADP + H(+). This Dictyostelium discoideum (Social amoeba) protein is Probable serine/threonine-protein kinase DDB_G0278845.